We begin with the raw amino-acid sequence, 293 residues long: Heterogeneous nuclear ribonucleoprotein D-like-A (293 aa).

Positions 1–21 (MAGFGAAPDFNEGSKINASKN) are disordered. 2 consecutive RRM domains span residues 26-108 (GKMF…KGKE) and 111-188 (KKVF…AAQP). 2 disordered regions span residues 193 to 224 (RQQQ…GWNQ) and 274 to 293 (QSTY…YQPY). Gly residues predominate over residues 202–222 (GGRGAVTGRGGTRGRGRGQGW).

Its subcellular location is the nucleus. It localises to the cytoplasm. Acts as a transcriptional regulator. Binds DNA and RNA. The sequence is that of Heterogeneous nuclear ribonucleoprotein D-like-A (hnrnpdl-a) from Xenopus laevis (African clawed frog).